The chain runs to 1050 residues: Nuclear pore complex-interacting protein family member B3 (1050 aa).

Residues 63 to 87 (VIIAFPTSYKVVITLWIVYLWVSLL) form a helical membrane-spanning segment. Disordered stretches follow at residues 241–262 (NRMG…NSLS), 290–574 (LTPL…NIKT), and 785–1050 (ERLR…RRLS). The segment covering 252–262 (QQHSITDNSLS) has biased composition (polar residues). Residues 349-359 (PLPPSALPSAP) show a composition bias toward pro residues. Basic and acidic residues-rich tracts occupy residues 406–416 (DNIKTPAERLR), 448–458 (DNIKTPAERLR), 490–500 (DNIKTPAERLR), 528–538 (DNIKTPAERLR), 820–830 (DNIKTPAERLR), 862–872 (DNIKTPAERLR), and 904–914 (DNIKTPAERLR).

Belongs to the NPIP family.

Its subcellular location is the membrane. The sequence is that of Nuclear pore complex-interacting protein family member B3 (NPIPB3) from Homo sapiens (Human).